We begin with the raw amino-acid sequence, 207 residues long: Ubiquinol-cytochrome c reductase iron-sulfur subunit (207 aa).

The helical transmembrane segment at 24 to 44 (LVAATSVVGAVGAGYALVPFV) threads the bilayer. Positions 100–199 (PKLVDPTSEV…HVYLNDTTIL (100 aa)) constitute a Rieske domain. Residues Cys-134, His-136, Cys-162, and His-165 each coordinate [2Fe-2S] cluster. An intrachain disulfide couples Cys-139 to Cys-164.

The main subunits of complex b-c1 are: cytochrome b, cytochrome c1 and the Rieske protein. [2Fe-2S] cluster serves as cofactor.

The protein localises to the cell membrane. It catalyses the reaction a quinol + 2 Fe(III)-[cytochrome c](out) = a quinone + 2 Fe(II)-[cytochrome c](out) + 2 H(+)(out). Its function is as follows. Component of the ubiquinol-cytochrome c reductase complex (complex III or cytochrome b-c1 complex), which is a respiratory chain that generates an electrochemical potential coupled to ATP synthesis. The protein is Ubiquinol-cytochrome c reductase iron-sulfur subunit (petA) of Allochromatium vinosum (strain ATCC 17899 / DSM 180 / NBRC 103801 / NCIMB 10441 / D) (Chromatium vinosum).